Consider the following 405-residue polypeptide: Polyadenylate-binding protein RBP45B (405 aa).

Residues 1-19 show a composition bias toward pro residues; that stretch reads MMQQPPPGGILPHHAPPPS. Positions 1-54 are disordered; that stretch reads MMQQPPPGGILPHHAPPPSAQQQYGYQQPYGIAGAAPPPPQMWNPQAAAPPSVQ. Positions 20 to 35 are enriched in low complexity; that stretch reads AQQQYGYQQPYGIAGA. RRM domains follow at residues 62-143, 155-234, and 261-333; these read RTLW…WASL, YTIF…PAAS, and TTVF…WGRS. The disordered stretch occupies residues 379 to 405; it reads GGYQQTPQAGQQPPQQPPQQQQVGFSY. A compositionally biased stretch (low complexity) spans 380 to 405; sequence GYQQTPQAGQQPPQQPPQQQQVGFSY.

The protein belongs to the polyadenylate-binding RBP45 family. As to quaternary structure, both isoform 1 and isoform 2 interact with poly(A)+ RNA in nucleus. In terms of tissue distribution, expressed in roots, leaves, stems, flowers, siliques, and seedlings. Present in immature anther tissues (tapetum cells) and mature pollen grains.

It is found in the nucleus. In terms of biological role, heterogeneous nuclear ribonucleoprotein (hnRNP)-protein binding the poly(A) tail of mRNA and probably involved in some steps of pre-mRNA maturation. The polypeptide is Polyadenylate-binding protein RBP45B (RBP45B) (Arabidopsis thaliana (Mouse-ear cress)).